The following is an 82-amino-acid chain: Sulfur carrier protein TusA (82 aa).

The Cysteine persulfide intermediate role is filled by cysteine 19.

It belongs to the sulfur carrier protein TusA family.

It is found in the cytoplasm. Functionally, sulfur carrier protein which probably makes part of a sulfur-relay system. In Vibrio campbellii (strain ATCC BAA-1116), this protein is Sulfur carrier protein TusA.